The chain runs to 102 residues: FMRFamide-like neuropeptides 9 (102 aa).

Positions 1–19 (MNQFYALFLVACIAAMANA) are cleaved as a signal peptide. A propeptide spanning residues 20-63 (YEEPDLDALAEFCGKESNRKYCDQIAQLATQHAIGINQEQVRME) is cleaved from the precursor. F72 bears the Phenylalanine amide mark. Residues 75–90 (RSGYPLVIDDEEMRMD) constitute a propeptide that is removed on maturation. A Phenylalanine amide modification is found at F99.

It belongs to the FARP (FMRFamide related peptide) family. As to expression, each flp gene is expressed in a distinct set of neurons.

The protein localises to the secreted. Functionally, FMRFamides and FMRFamide-like peptides are neuropeptides. In terms of biological role, KPSFVRF-amide: Has no effect on somatic body wall muscle, inhibits contraction of vaginal vera muscle, and inhibits the activity of the dissected pharyngeal myogenic muscle system. Acts as a ligand for the npr-22 receptor in vitro. This is FMRFamide-like neuropeptides 9 from Caenorhabditis elegans.